The sequence spans 331 residues: MKHNQNIDFVSIVIPVYNEEASLPELLSRTLAAADSMGKHYELVLIDDGSRDNSANIIEAAAAEPDSHVVGIILNRNYGQHNAIMAGFEHVRGDLIITLDADLQNPPEEIPNLVAKAEEGYDSVGTVRRHRQDSALRRYPSKLINKLVKRSTGVEMNDYGCMLRAYRRHVVKAMLECHERSTFIPILANGFARHTAEIDVHHSERSQGESKYGFMNLINLMFDLLTSMTTAPLRMLSIVGGGIASFGILFGLFLILLRLIYGAEWGVDGVFPLFSILFIFIGAQFVGLGLLGEYIGRIYSDVRARPRYYVQDILVGEATKGARISDENKNN.

2 helical membrane-spanning segments follow: residues 236 to 256 (LSIV…FLIL) and 270 to 290 (VFPL…GLGL).

This sequence belongs to the glycosyltransferase 2 family.

The protein localises to the cell inner membrane. The catalysed reaction is UDP-4-deoxy-4-formamido-beta-L-arabinose + di-trans,octa-cis-undecaprenyl phosphate = 4-deoxy-4-formamido-alpha-L-arabinopyranosyl di-trans,octa-cis-undecaprenyl phosphate + UDP. It functions in the pathway glycolipid biosynthesis; 4-amino-4-deoxy-alpha-L-arabinose undecaprenyl phosphate biosynthesis; 4-amino-4-deoxy-alpha-L-arabinose undecaprenyl phosphate from UDP-4-deoxy-4-formamido-beta-L-arabinose and undecaprenyl phosphate: step 1/2. Its pathway is bacterial outer membrane biogenesis; lipopolysaccharide biosynthesis. In terms of biological role, catalyzes the transfer of 4-deoxy-4-formamido-L-arabinose from UDP to undecaprenyl phosphate. The modified arabinose is attached to lipid A and is required for resistance to polymyxin and cationic antimicrobial peptides. This chain is Undecaprenyl-phosphate 4-deoxy-4-formamido-L-arabinose transferase, found in Shewanella sediminis (strain HAW-EB3).